The chain runs to 1163 residues: Receptor-type guanylate cyclase gcy-21 (1163 aa).

Positions 1–17 (MLSAVLLLLFFIQNVQN) are cleaved as a signal peptide. Over 18-490 (FDKIELEDIT…ENCGPPANNT (473 aa)) the chain is Extracellular. Residues Asn-102, Asn-296, Asn-322, Asn-346, Asn-466, and Asn-488 are each glycosylated (N-linked (GlcNAc...) asparagine). The chain crosses the membrane as a helical span at residues 491–511 (FIIVISVGVAVLIGLAIAAAF). The Cytoplasmic portion of the chain corresponds to 512 to 1163 (LYKRYRYERR…QIQEKTYEFS (652 aa)). The region spanning 587-882 (FNTGSTARAG…QIKRKLKPLT (296 aa)) is the Protein kinase domain. ATP is bound by residues 593–601 (ARAGPFGPI) and Lys-635. Residues 901–930 (TDKLEKDIAERNEELEGEKAKSEALLKMML) adopt a coiled-coil conformation. The region spanning 953 to 1083 (TVFFSDCPGF…DTVNTASRME (131 aa)) is the Guanylate cyclase domain.

This sequence belongs to the adenylyl cyclase class-4/guanylyl cyclase family. Expressed in ASG sensory neurons.

It localises to the cell membrane. The catalysed reaction is GTP = 3',5'-cyclic GMP + diphosphate. Functionally, guanylate cyclase involved in the production of the second messenger cGMP. Plays a role in dauer formation. This chain is Receptor-type guanylate cyclase gcy-21, found in Caenorhabditis elegans.